A 546-amino-acid chain; its full sequence is Probable protein kinase UbiB (546 aa).

Positions 124-502 (DFDIQPLASA…HVRQSQSRYL (379 aa)) constitute a Protein kinase domain. Residues 130–138 (LASASIAQV) and lysine 153 contribute to the ATP site. The active-site Proton acceptor is the aspartate 288. 2 consecutive transmembrane segments (helical) span residues 501 to 521 (YLLG…VNRP) and 522 to 542 (EWGL…LVGW).

The protein belongs to the ABC1 family. UbiB subfamily.

Its subcellular location is the cell inner membrane. It functions in the pathway cofactor biosynthesis; ubiquinone biosynthesis [regulation]. Functionally, is probably a protein kinase regulator of UbiI activity which is involved in aerobic coenzyme Q (ubiquinone) biosynthesis. The chain is Probable protein kinase UbiB from Salmonella agona (strain SL483).